The chain runs to 1343 residues: DNA-directed RNA polymerase subunit beta (1343 aa).

It belongs to the RNA polymerase beta chain family. In terms of assembly, the RNAP catalytic core consists of 2 alpha, 1 beta, 1 beta' and 1 omega subunit. When a sigma factor is associated with the core the holoenzyme is formed, which can initiate transcription.

It carries out the reaction RNA(n) + a ribonucleoside 5'-triphosphate = RNA(n+1) + diphosphate. DNA-dependent RNA polymerase catalyzes the transcription of DNA into RNA using the four ribonucleoside triphosphates as substrates. In Shewanella violacea, this protein is DNA-directed RNA polymerase subunit beta.